Here is a 307-residue protein sequence, read N- to C-terminus: Homoserine O-acetyltransferase (307 aa).

Cys142 acts as the Acyl-thioester intermediate in catalysis. Substrate is bound by residues Lys163 and Ser192. The active-site Proton acceptor is the His235. The active site involves Glu237. Arg249 is a substrate binding site.

It belongs to the MetA family.

It is found in the cytoplasm. The enzyme catalyses L-homoserine + acetyl-CoA = O-acetyl-L-homoserine + CoA. It participates in amino-acid biosynthesis; L-methionine biosynthesis via de novo pathway; O-acetyl-L-homoserine from L-homoserine: step 1/1. In terms of biological role, transfers an acetyl group from acetyl-CoA to L-homoserine, forming acetyl-L-homoserine. This Rhizobium johnstonii (strain DSM 114642 / LMG 32736 / 3841) (Rhizobium leguminosarum bv. viciae) protein is Homoserine O-acetyltransferase.